The following is a 398-amino-acid chain: Type III polyketide synthase pspB (398 aa).

CoA contacts are provided by residues K47 and 47 to 54 (KLLQINRS). Residue C152 is the Nucleophile of the active site. 214–215 (SD) contacts substrate. CoA is bound by residues L267, G321, 321-324 (GGEA), and A324.

Belongs to the thiolase-like superfamily. Chalcone/stilbene synthases family. Homodimer.

It catalyses the reaction 11 malonyl-CoA + acetyl-CoA + S-adenosyl-L-methionine + 12 NADPH + 22 H(+) = soppiline B + S-adenosyl-L-homocysteine + 12 CO2 + 12 NADP(+) + 12 CoA + 8 H2O. It participates in secondary metabolite biosynthesis. Its function is as follows. Type III polyketide synthase; part of the gene cluster that mediates the biosynthesis of the alkylresorcinols called soppilines. The biosynthesis starts with the HR-PKS pspA-catalyzed carbon chain assembly through nine chain elongation cycles, using acetyl CoA and malonyl CoA as a starter and extender units, respectively, to produce the polyketide soppiline A. In the first round, the KR, DH, and CMeT domains work to produce 2-methyl-2-butenyl thioester. In rounds 2 to 5, the KR, DH, and ER domains fully catalyze the reduction of the elongated beta-ketothioester, resulting in the insertion of eight methylene units. The unusual Z,E,Z-triene motif is likely constructed during rounds 6 to 8. Typically, the DH domain introduces a double bond at an alpha,beta-position of an elongated polyketide chain, with the dehydration of a beta-hydroxy group. The last extension cycle would be carried out with L-oriented beta-ketoreduction by the KR domain to produce beta-hydroxy carboxylic acid soppiline A. The type III PKS pspB intercepts the elongated polyketide chain at round 8 from the HR-PKS pspA, followed by a tri-keto extension and decarboxylative aldol cyclization to produce 1,3,5-trisubstituted alkylresorcinol soppiline B. Subsequently, the cytochrome P450 monooxygenase pspC catalyzes three-step oxidations at the C-4 methyl group to carboxylic acid to yield soppiline C. The sequence is that of Type III polyketide synthase pspB from Penicillium soppii.